The sequence spans 478 residues: NAD(+) hydrolase ThsA (478 aa).

A Deacetylase sirtuin-type domain is found at 1–287; the sequence is MDKKVLIKRF…SIRKKYLRKT (287 aa). A19, D110, and H148 together coordinate NAD(+). The active-site Proton acceptor is the H148. The segment at 288 to 478 is SLOG (STALD) domain; sequence IFISGSAVDY…VSLINSIQED (191 aa). 3'cADPR contacts are provided by G292, S293, L330, R373, K390, G401, and E405.

Belongs to the soluble Thoeris ThsA family. In terms of assembly, homotetramer in solution.

The enzyme catalyses NAD(+) + H2O = ADP-D-ribose + nicotinamide + H(+). Its activity is regulated as follows. Activated by 3'cADPR. In terms of biological role, NAD(+) hydrolyzing component (NADase) of the Thoeris antiviral defense system, composed of ThsA and ThsB (maybe AS248_15445). Activated by 3' cyclic ADP-D-ribose (3'cADPR) but not its isomers 2'cADPR, cADPR and very weakly by ADPR; binds 3'cADPR better than 2'cADPR. Upon activation binds and hydrolyzes NAD(+), leading to cell death and inhibition of phage replication. The sequence is that of NAD(+) hydrolase ThsA from Enterococcus faecium (Streptococcus faecium).